The primary structure comprises 758 residues: Photosystem I P700 chlorophyll a apoprotein A1 (758 aa).

Transmembrane regions (helical) follow at residues 78–101, 164–187, 203–227, 299–317, 354–377, 393–419, 441–463, and 539–557; these read VFSA…FHGA, LYCT…FHYH, LNHH…HVSL, IAHH…GHMY, WHAQ…QHMY, LSLF…IFMV, AIIS…LYIH, and FLVH…LILL. [4Fe-4S] cluster is bound by residues Cys581 and Cys590. Helical transmembrane passes span 597 to 618 and 672 to 694; these read HVFL…HFSW and LSAY…MFLF. Position 683 (His683) interacts with chlorophyll a'. Met691 and Tyr699 together coordinate chlorophyll a. Residue Trp700 coordinates phylloquinone. Residues 732-753 form a helical membrane-spanning segment; sequence AVGVTHYLLGGIATTWAFFLAR.

The protein belongs to the PsaA/PsaB family. In terms of assembly, the PsaA/B heterodimer binds the P700 chlorophyll special pair and subsequent electron acceptors. PSI consists of a core antenna complex that captures photons, and an electron transfer chain that converts photonic excitation into a charge separation. The eukaryotic PSI reaction center is composed of at least 11 subunits. It depends on P700 is a chlorophyll a/chlorophyll a' dimer, A0 is one or more chlorophyll a, A1 is one or both phylloquinones and FX is a shared 4Fe-4S iron-sulfur center. as a cofactor.

The protein resides in the plastid. It is found in the chloroplast thylakoid membrane. The catalysed reaction is reduced [plastocyanin] + hnu + oxidized [2Fe-2S]-[ferredoxin] = oxidized [plastocyanin] + reduced [2Fe-2S]-[ferredoxin]. In terms of biological role, psaA and PsaB bind P700, the primary electron donor of photosystem I (PSI), as well as the electron acceptors A0, A1 and FX. PSI is a plastocyanin-ferredoxin oxidoreductase, converting photonic excitation into a charge separation, which transfers an electron from the donor P700 chlorophyll pair to the spectroscopically characterized acceptors A0, A1, FX, FA and FB in turn. Oxidized P700 is reduced on the lumenal side of the thylakoid membrane by plastocyanin. This chain is Photosystem I P700 chlorophyll a apoprotein A1, found in Pisum sativum (Garden pea).